The primary structure comprises 242 residues: U1 small nuclear ribonucleoprotein C (242 aa).

The segment at 3–35 (YLGDYCDVYLTHDSMSVRKAHNSGRNHLRNVVE) adopts a Matrin-type; degenerate zinc-finger fold. The interval 60–242 (GQASSNPMLQ…SSPGPSQEGK (183 aa)) is disordered. Composition is skewed to pro residues over residues 90–107 (MLPPPPPFGMPGAPPGAP), 136–149 (PPMPGDLPPPPLPN), 156–183 (PFPPPNGFPPNFQFPPPGAAGFPPPPIP), and 201–213 (PVPPPGFPLPGAP). Residues 231-242 (PASSPGPSQEGK) are compositionally biased toward polar residues.

It belongs to the U1 small nuclear ribonucleoprotein C family. U1 snRNP is composed of the 7 core Sm proteins B/B', D1, D2, D3, E, F and G that assemble in a heptameric protein ring on the Sm site of the small nuclear RNA to form the core snRNP, and at least 3 U1 snRNP-specific proteins U1-70K, U1-A and U1-C. U1-C interacts with U1 snRNA and the 5' splice-site region of the pre-mRNA.

It localises to the nucleus. Functionally, component of the spliceosomal U1 snRNP, which is essential for recognition of the pre-mRNA 5' splice-site and the subsequent assembly of the spliceosome. U1-C is directly involved in initial 5' splice-site recognition for both constitutive and regulated alternative splicing. The interaction with the 5' splice-site seems to precede base-pairing between the pre-mRNA and the U1 snRNA. Stimulates commitment or early (E) complex formation by stabilizing the base pairing of the 5' end of the U1 snRNA and the 5' splice-site region. In Ajellomyces capsulatus (strain G186AR / H82 / ATCC MYA-2454 / RMSCC 2432) (Darling's disease fungus), this protein is U1 small nuclear ribonucleoprotein C.